The following is a 20-amino-acid chain: DnaJ homolog subfamily C member 1 (20 aa).

Topologically, residues 1–20 are lumenal; it reads WESGDLELFDLVEEVXLNFY. The J domain maps to 18–20; that stretch reads NFY.

Interacts (via SANT 2 domain) with SERPINA3; the interaction delays the formation of the covalent inhibitory complex SERPINA3-chymotrypsin, but does not alter the catalytic activity of SERPINA3. Interacts (via SANT 2 domain) with ITIH4 (via C-terminus); the interaction protects ITIH4 against in vitro cleavage by kallikrein. Interacts (via J domain) with HSPA5. Interacts (via cytosolic domain) with ribosomes.

It localises to the endoplasmic reticulum membrane. Its subcellular location is the nucleus membrane. It is found in the microsome membrane. The chain is DnaJ homolog subfamily C member 1 (DNAJC1) from Canis lupus familiaris (Dog).